Here is a 515-residue protein sequence, read N- to C-terminus: ATP synthase subunit alpha (515 aa).

171-178 (GDRQTGKT) serves as a coordination point for ATP.

This sequence belongs to the ATPase alpha/beta chains family. As to quaternary structure, F-type ATPases have 2 components, CF(1) - the catalytic core - and CF(0) - the membrane proton channel. CF(1) has five subunits: alpha(3), beta(3), gamma(1), delta(1), epsilon(1). CF(0) has three main subunits: a(1), b(2) and c(9-12). The alpha and beta chains form an alternating ring which encloses part of the gamma chain. CF(1) is attached to CF(0) by a central stalk formed by the gamma and epsilon chains, while a peripheral stalk is formed by the delta and b chains.

The protein localises to the cell inner membrane. It carries out the reaction ATP + H2O + 4 H(+)(in) = ADP + phosphate + 5 H(+)(out). Its function is as follows. Produces ATP from ADP in the presence of a proton gradient across the membrane. The alpha chain is a regulatory subunit. The protein is ATP synthase subunit alpha of Coxiella burnetii (strain CbuK_Q154) (Coxiella burnetii (strain Q154)).